Here is a 674-residue protein sequence, read N- to C-terminus: Methionine--tRNA ligase (674 aa).

The 'HIGH' region signature appears at 11–21 (PYANGDLHLGH). Cys-142, Cys-145, Cys-155, and Cys-158 together coordinate Zn(2+). A 'KMSKS' region motif is present at residues 330-334 (KMSKS). Lys-333 lines the ATP pocket. The region spanning 574–674 (DFMKVDLRIA…EGAQPGMRVK (101 aa)) is the tRNA-binding domain.

Belongs to the class-I aminoacyl-tRNA synthetase family. MetG type 1 subfamily. As to quaternary structure, homodimer. The cofactor is Zn(2+).

The protein localises to the cytoplasm. The catalysed reaction is tRNA(Met) + L-methionine + ATP = L-methionyl-tRNA(Met) + AMP + diphosphate. Functionally, is required not only for elongation of protein synthesis but also for the initiation of all mRNA translation through initiator tRNA(fMet) aminoacylation. The sequence is that of Methionine--tRNA ligase from Francisella tularensis subsp. holarctica (strain OSU18).